Here is a 569-residue protein sequence, read N- to C-terminus: Glycylpeptide N-tetradecanoyltransferase (569 aa).

A compositionally biased stretch (basic and acidic residues) spans 1-18 (MPPTEESKPVDPAQEKQA). The tract at residues 1–82 (MPPTEESKPV…STESSAEVGL (82 aa)) is disordered. Positions 55-68 (TKKKNKKKSKKKNK) are enriched in basic residues. Tetradecanoyl-CoA contacts are provided by residues 158–161 (YKFW), 291–293 (LCI), and 299–303 (GKRLA). Val569 (proton acceptor; via carboxylate) is an active-site residue.

It belongs to the NMT family. Monomer.

It is found in the cytoplasm. It carries out the reaction N-terminal glycyl-[protein] + tetradecanoyl-CoA = N-tetradecanoylglycyl-[protein] + CoA + H(+). Functionally, adds a myristoyl group to the N-terminal glycine residue of certain cellular proteins. This chain is Glycylpeptide N-tetradecanoyltransferase (gtt-1), found in Neurospora crassa (strain ATCC 24698 / 74-OR23-1A / CBS 708.71 / DSM 1257 / FGSC 987).